A 294-amino-acid chain; its full sequence is Ribosomal protein L11 methyltransferase (294 aa).

S-adenosyl-L-methionine is bound by residues threonine 145, glycine 166, aspartate 188, and asparagine 230.

It belongs to the methyltransferase superfamily. PrmA family.

Its subcellular location is the cytoplasm. It carries out the reaction L-lysyl-[protein] + 3 S-adenosyl-L-methionine = N(6),N(6),N(6)-trimethyl-L-lysyl-[protein] + 3 S-adenosyl-L-homocysteine + 3 H(+). Its function is as follows. Methylates ribosomal protein L11. The chain is Ribosomal protein L11 methyltransferase from Glaesserella parasuis serovar 5 (strain SH0165) (Haemophilus parasuis).